Here is a 346-residue protein sequence, read N- to C-terminus: GTPase Obg (346 aa).

One can recognise an Obg domain in the interval 1–159 (MKFLDSAKIY…RTVLLRLKLI (159 aa)). Positions 160 to 327 (ADAGLVGLPN…ALRAVLAEID (168 aa)) constitute an OBG-type G domain. GTP-binding positions include 166-173 (GLPNAGKS), 191-195 (FTTLN), 212-215 (DIPG), 279-282 (SKVD), and 308-310 (SAA). Residues Ser173 and Thr193 each contribute to the Mg(2+) site.

This sequence belongs to the TRAFAC class OBG-HflX-like GTPase superfamily. OBG GTPase family. Monomer. It depends on Mg(2+) as a cofactor.

The protein localises to the cytoplasm. Its function is as follows. An essential GTPase which binds GTP, GDP and possibly (p)ppGpp with moderate affinity, with high nucleotide exchange rates and a fairly low GTP hydrolysis rate. Plays a role in control of the cell cycle, stress response, ribosome biogenesis and in those bacteria that undergo differentiation, in morphogenesis control. This is GTPase Obg from Methylocella silvestris (strain DSM 15510 / CIP 108128 / LMG 27833 / NCIMB 13906 / BL2).